The sequence spans 111 residues: Universal stress protein B (111 aa).

Helical transmembrane passes span 1 to 21 (MINT…NMLR) and 90 to 110 (FILT…LMLW).

Belongs to the universal stress protein B family.

It is found in the cell inner membrane. The sequence is that of Universal stress protein B from Edwardsiella ictaluri (strain 93-146).